The sequence spans 267 residues: tRNA pseudouridine synthase A (267 aa).

The active-site Nucleophile is the Asp-51. Residue Tyr-109 participates in substrate binding.

Belongs to the tRNA pseudouridine synthase TruA family. In terms of assembly, homodimer.

The enzyme catalyses uridine(38/39/40) in tRNA = pseudouridine(38/39/40) in tRNA. Functionally, formation of pseudouridine at positions 38, 39 and 40 in the anticodon stem and loop of transfer RNAs. The protein is tRNA pseudouridine synthase A of Staphylococcus aureus (strain MSSA476).